We begin with the raw amino-acid sequence, 192 residues long: Ion-translocating oxidoreductase complex subunit A (192 aa).

Transmembrane regions (helical) follow at residues 5–25 (ILLL…FLGL), 39–59 (IGMG…AYLV), 67–87 (LGIE…VVQF), 102–122 (LLGI…VALL), 134–154 (IIYG…FASM), and 171–191 (SIAM…TGLV).

This sequence belongs to the NqrDE/RnfAE family. In terms of assembly, the complex is composed of six subunits: RnfA, RnfB, RnfC, RnfD, RnfE and RnfG.

It is found in the cell inner membrane. Its function is as follows. Part of a membrane-bound complex that couples electron transfer with translocation of ions across the membrane. The chain is Ion-translocating oxidoreductase complex subunit A from Vibrio campbellii (strain ATCC BAA-1116).